An 834-amino-acid chain; its full sequence is Probable basic-leucine zipper transcription factor D (834 aa).

The interval 83–160 is disordered; that stretch reads NNNNMLNDHS…SNNNSSSEGE (78 aa). The segment covering 90–111 has biased composition (polar residues); it reads DHSSSPMRVPNSSPSLYNNSIE. The segment covering 119-157 has biased composition (low complexity); it reads DNSNNNNNNNNNINVNDINVNDINSNSTNNNESNNNSSS. The stretch at 211-246 forms a coiled coil; it reads SEQQQQQQQQQQQQQQQQQQQQQQQQQHQHLLQEHQ. The interval 378-405 is disordered; sequence VVDPPTHNQEDERNVKKQRRLIKNRESA. The region spanning 391–454 is the bZIP domain; sequence NVKKQRRLIK…KQLAAQNSNS (64 aa). The basic motif stretch occupies residues 393–402; the sequence is KKQRRLIKNR. The leucine-zipper stretch occupies residues 407–414; it reads LSRMRKKI. Disordered regions lie at residues 455–504 and 550–712; these read NNNS…QQQS and LSMS…KTPQ. The segment covering 550–595 has biased composition (polar residues); that stretch reads LSMSDSESSPQKSLRLSSNHHSLPDGTFNTIPIDQQTTATTNTKSL. 2 stretches are compositionally biased toward low complexity: residues 616-651 and 694-707; these read NNNNNNNNNNNNNNNNNNNNNNNNNNNNNNNNNNNN and TTTTTTTTTTTTST.

Belongs to the bZIP family.

The protein localises to the nucleus. Its function is as follows. Probable transcriptional regulator. The chain is Probable basic-leucine zipper transcription factor D (bzpD) from Dictyostelium discoideum (Social amoeba).